A 590-amino-acid polypeptide reads, in one-letter code: Type I inositol polyphosphate 5-phosphatase 1 (590 aa).

Positions 47–73 (DYSADSDDDYEDRSQEFDPISSGVTNP) are disordered. Positions 48–57 (YSADSDDDYE) are enriched in acidic residues. Serine 60 bears the Phosphoserine mark. 2 catalytic regions span residues 445–460 (ERIIWLGDLNYRINLS) and 523–538 (GKRRPAWCDRIIWNGK).

The protein belongs to the inositol polyphosphate 5-phosphatase family. As to expression, expressed ubiquitously.

It carries out the reaction 1D-myo-inositol 1,4,5-trisphosphate + H2O = 1D-myo-inositol 1,4-bisphosphate + phosphate. The enzyme catalyses 1D-myo-inositol 1,3,4,5-tetrakisphosphate + H2O = 1D-myo-inositol 1,3,4-trisphosphate + phosphate. Has phosphatase activity toward Ins(1,4,5)P3 and Ins(1,3,4,5)P4, but not toward Ins(1,4)P2, Ins(1)P. Seems to be involved in the abscisic acid (ABA) signaling pathway. Could also be able to hydrolyze PtdIns(4,5)P2 and PtdIns(3,4,5)P3. The polypeptide is Type I inositol polyphosphate 5-phosphatase 1 (Arabidopsis thaliana (Mouse-ear cress)).